The sequence spans 541 residues: Chaperonin GroEL 2 (541 aa).

ATP is bound by residues 29–32, 86–90, glycine 413, 476–478, and aspartate 492; these read TLGP, DGTTT, and NAA.

Belongs to the chaperonin (HSP60) family. Forms a cylinder of 14 subunits composed of two heptameric rings stacked back-to-back. Interacts with the co-chaperonin GroES.

The protein localises to the secreted. The protein resides in the capsule. It is found in the cell surface. Its subcellular location is the cell wall. It catalyses the reaction ATP + H2O + a folded polypeptide = ADP + phosphate + an unfolded polypeptide.. Its function is as follows. Together with its co-chaperonin GroES, plays an essential role in assisting protein folding. The GroEL-GroES system forms a nano-cage that allows encapsulation of the non-native substrate proteins and provides a physical environment optimized to promote and accelerate protein folding. This chain is Chaperonin GroEL 2, found in Mycobacterium leprae (strain TN).